The primary structure comprises 526 residues: Rho guanine nucleotide exchange factor 3 (526 aa).

Residues 20-40 are disordered; the sequence is ELPPASGPAKDAEEPSNKRVK. Phosphoserine is present on residues Ser-47 and Ser-70. The 183-residue stretch at 122–304 folds into the DH domain; that stretch reads KRQEAIFELS…QGIVAEINTK (183 aa). The PH domain maps to 291–449; it reads INIIQGIVAE…WLNCIRQAKE (159 aa). Disordered regions lie at residues 464 to 502 and 507 to 526; these read EGSF…TSEV and EHME…ESNV. Residues 466-475 show a composition bias toward polar residues; it reads SFLNPTTGSR.

As to quaternary structure, interacts with RHOA and RHOB.

It is found in the cytoplasm. Acts as a guanine nucleotide exchange factor (GEF) for RhoA and RhoB GTPases. The protein is Rho guanine nucleotide exchange factor 3 (ARHGEF3) of Macaca fascicularis (Crab-eating macaque).